Consider the following 450-residue polypeptide: Tubulin alpha chain (450 aa).

Gln11 lines the GTP pocket. Lys40 is modified (N6-acetyllysine). The GTP site is built by Glu71, Ser140, Gly144, Thr145, Thr179, Asn206, and Asn228. Glu71 serves as a coordination point for Mg(2+). The active site involves Glu254.

The protein belongs to the tubulin family. As to quaternary structure, dimer of alpha and beta chains. A typical microtubule is a hollow water-filled tube with an outer diameter of 25 nm and an inner diameter of 15 nM. Alpha-beta heterodimers associate head-to-tail to form protofilaments running lengthwise along the microtubule wall with the beta-tubulin subunit facing the microtubule plus end conferring a structural polarity. Microtubules usually have 13 protofilaments but different protofilament numbers can be found in some organisms and specialized cells. The cofactor is Mg(2+). Undergoes a tyrosination/detyrosination cycle, the cyclic removal and re-addition of a C-terminal tyrosine residue by the enzymes tubulin tyrosine carboxypeptidase (TTCP) and tubulin tyrosine ligase (TTL), respectively. In terms of processing, acetylation of alpha chains at Lys-40 stabilizes microtubules and affects affinity and processivity of microtubule motors. This modification has a role in multiple cellular functions, ranging from cell motility, cell cycle progression or cell differentiation to intracellular trafficking and signaling.

The protein localises to the cytoplasm. The protein resides in the cytoskeleton. The enzyme catalyses GTP + H2O = GDP + phosphate + H(+). Tubulin is the major constituent of microtubules, a cylinder consisting of laterally associated linear protofilaments composed of alpha- and beta-tubulin heterodimers. Microtubules grow by the addition of GTP-tubulin dimers to the microtubule end, where a stabilizing cap forms. Below the cap, tubulin dimers are in GDP-bound state, owing to GTPase activity of alpha-tubulin. This Lepidoglyphus destructor (Storage mite) protein is Tubulin alpha chain.